We begin with the raw amino-acid sequence, 434 residues long: Histidinol dehydrogenase (434 aa).

NAD(+) contacts are provided by tyrosine 130, glutamine 188, and asparagine 211. Residues serine 237, glutamine 259, and histidine 262 each contribute to the substrate site. The Zn(2+) site is built by glutamine 259 and histidine 262. Active-site proton acceptor residues include glutamate 326 and histidine 327. Substrate-binding residues include histidine 327, aspartate 360, glutamate 414, and histidine 419. Residue aspartate 360 participates in Zn(2+) binding. Histidine 419 is a binding site for Zn(2+).

It belongs to the histidinol dehydrogenase family. Homodimer. Zn(2+) serves as cofactor.

The catalysed reaction is L-histidinol + 2 NAD(+) + H2O = L-histidine + 2 NADH + 3 H(+). It functions in the pathway amino-acid biosynthesis; L-histidine biosynthesis; L-histidine from 5-phospho-alpha-D-ribose 1-diphosphate: step 9/9. In terms of biological role, catalyzes the sequential NAD-dependent oxidations of L-histidinol to L-histidinaldehyde and then to L-histidine. This chain is Histidinol dehydrogenase, found in Shigella boydii serotype 4 (strain Sb227).